The chain runs to 306 residues: Reticulocalbin-2 (306 aa).

An N-terminal signal peptide occupies residues 1–22 (MESPTLLGLLLLLLGGPGTSLG). EF-hand domains are found at residues 50–85 (EQQKRLKVIISRIDVDLDGFLTEAELSSWIQHSFKS), 86–121 (YIIEDAKQQFQHYDKDGDGRVSWEEYNIQMYDRVID), 144–173 (KKRFQKANKDGDSHLDFEEFAAFEHPEEAD), 175–210 (MKEFVIQESLEEHDKDGDGFVSLQEFLGDYRRDPAA), 226–251 (NDYDKDKDGKLSPKELLTWVMPNNEG), and 252–287 (LAQEEAVHLLDEMDLDGDRRLSANEILENQDLFLNS). Aspartate 99, aspartate 101, aspartate 103, arginine 105, and glutamate 110 together coordinate Ca(2+). Ca(2+) is bound by residues aspartate 188, aspartate 190, aspartate 192, glutamate 199, aspartate 229, aspartate 231, aspartate 233, lysine 235, glutamate 240, aspartate 265, aspartate 267, aspartate 269, arginine 271, and glutamate 276.

Belongs to the CREC family. In terms of assembly, may bind phospholipase A2, since the rat reticulocalbin-2 has been isolated on the phospholipase complex taipoxin columns. In terms of tissue distribution, expressed by the venom gland.

It localises to the secreted. This is Reticulocalbin-2 from Crotalus adamanteus (Eastern diamondback rattlesnake).